Consider the following 370-residue polypeptide: Flagellar P-ring protein (370 aa).

The N-terminal stretch at 1-21 (MKYILIKLSIVMIFIINSASK) is a signal peptide.

This sequence belongs to the FlgI family. In terms of assembly, the basal body constitutes a major portion of the flagellar organelle and consists of four rings (L,P,S, and M) mounted on a central rod.

The protein resides in the bacterial flagellum basal body. Its function is as follows. Assembles around the rod to form the L-ring and probably protects the motor/basal body from shearing forces during rotation. This is Flagellar P-ring protein from Wigglesworthia glossinidia brevipalpis.